A 429-amino-acid chain; its full sequence is Serine--tRNA ligase (429 aa).

229–231 provides a ligand contact to L-serine; sequence TAE. 260 to 262 contacts ATP; the sequence is RSE. An L-serine-binding site is contributed by glutamate 283. An ATP-binding site is contributed by 347-350; the sequence is EISS. L-serine is bound at residue serine 383.

It belongs to the class-II aminoacyl-tRNA synthetase family. Type-1 seryl-tRNA synthetase subfamily. As to quaternary structure, homodimer. The tRNA molecule binds across the dimer.

It is found in the cytoplasm. It catalyses the reaction tRNA(Ser) + L-serine + ATP = L-seryl-tRNA(Ser) + AMP + diphosphate + H(+). It carries out the reaction tRNA(Sec) + L-serine + ATP = L-seryl-tRNA(Sec) + AMP + diphosphate + H(+). Its pathway is aminoacyl-tRNA biosynthesis; selenocysteinyl-tRNA(Sec) biosynthesis; L-seryl-tRNA(Sec) from L-serine and tRNA(Sec): step 1/1. Its function is as follows. Catalyzes the attachment of serine to tRNA(Ser). Is also able to aminoacylate tRNA(Sec) with serine, to form the misacylated tRNA L-seryl-tRNA(Sec), which will be further converted into selenocysteinyl-tRNA(Sec). This is Serine--tRNA ligase from Orientia tsutsugamushi (strain Ikeda) (Rickettsia tsutsugamushi).